The primary structure comprises 363 residues: Lipase (363 aa).

A signal peptide spans 1-24; that stretch reads MVLKQRANYLGFLIVFFTAFLVEA. The propeptide occupies 25 to 94; sequence VPIKRQSNST…SYPDSVVQAM (70 aa). Residues 33–69 form a disordered region; the sequence is STVDSLPPLIPSRTSAPSSSPSTTDPEAPAMSRNGPL. A compositionally biased stretch (low complexity) spans 43–62; sequence PSRTSAPSSSPSTTDPEAPA. Disulfide bonds link Cys123-Cys362, Cys134-Cys137, and Cys329-Cys338. The active-site Nucleophile is Ser238. The active-site Charge relay system is Asp297. Asp350 is a binding site for Ca(2+). Catalysis depends on His351, which acts as the Charge relay system.

Belongs to the AB hydrolase superfamily. Lipase family.

The catalysed reaction is a triacylglycerol + H2O = a diacylglycerol + a fatty acid + H(+). This is Lipase from Rhizomucor miehei.